Consider the following 619-residue polypeptide: MPTYRSKTSTAGRNMAGARSLWRATGMKDDDFSKPIIAVVNSFTQFVPGHVHLKDLGQLVAREIEAAGGVAKEFNTIAVDDGIAMGHDGMLYSLPSRDIIADSVEYMVNAHCADAMVCISNCDKITPGMLMAAMRLNIPVIFVSGGPMEAGKTRLANPVTKTIELKKLDLVDAMVIAADQSYSDADVAEVERSACPTCGSCSGMFTANSMNCLTEALGLSLPGNGTVVATHADREQLFKRAGRRIVELTRQYYEQDDVRVLPRSVGFNAFENAMTLDIAMGGSTNTILHLLAIAREAGIDFTMRDIDRLSRVVPQLCKVAPNTNKYHIEDVHRAGGIMAILGELDRAGRLHTDVPTVHAPTLKDALDQWDIVRTQDEAVRKFYLAGPAGVPTQIAFSQDTRWPSLDLDRAEGCIRSYEHAFSKEGGLAVLTGNIALDGCVVKTAGVDESILVFEGSAHVTESQDEAVENILNDKVKAGDVVIVRYEGPKGGPGMQEMLYPTSYIKSKGLGKACALLTDGRFSGGTSGLSIGHCSPEAAAGGAIGLVRDGDRIRIDIPNRTIDVLVSDEELARRREEQNAKGWKPAQPRPRKVSAALKAYAKLVMSADKGAVRDLSLLDD.

Aspartate 81 is a binding site for Mg(2+). Cysteine 122 serves as a coordination point for [2Fe-2S] cluster. Positions 123 and 124 each coordinate Mg(2+). Position 124 is an N6-carboxylysine (lysine 124). [2Fe-2S] cluster is bound at residue cysteine 201. Glutamate 496 serves as a coordination point for Mg(2+). Serine 522 acts as the Proton acceptor in catalysis.

This sequence belongs to the IlvD/Edd family. Homodimer. It depends on [2Fe-2S] cluster as a cofactor. Mg(2+) is required as a cofactor.

It catalyses the reaction (2R)-2,3-dihydroxy-3-methylbutanoate = 3-methyl-2-oxobutanoate + H2O. The catalysed reaction is (2R,3R)-2,3-dihydroxy-3-methylpentanoate = (S)-3-methyl-2-oxopentanoate + H2O. It functions in the pathway amino-acid biosynthesis; L-isoleucine biosynthesis; L-isoleucine from 2-oxobutanoate: step 3/4. Its pathway is amino-acid biosynthesis; L-valine biosynthesis; L-valine from pyruvate: step 3/4. Its function is as follows. Functions in the biosynthesis of branched-chain amino acids. Catalyzes the dehydration of (2R,3R)-2,3-dihydroxy-3-methylpentanoate (2,3-dihydroxy-3-methylvalerate) into 2-oxo-3-methylpentanoate (2-oxo-3-methylvalerate) and of (2R)-2,3-dihydroxy-3-methylbutanoate (2,3-dihydroxyisovalerate) into 2-oxo-3-methylbutanoate (2-oxoisovalerate), the penultimate precursor to L-isoleucine and L-valine, respectively. The chain is Dihydroxy-acid dehydratase from Burkholderia vietnamiensis (strain G4 / LMG 22486) (Burkholderia cepacia (strain R1808)).